A 695-amino-acid chain; its full sequence is NADPH--cytochrome P450 reductase (695 aa).

The Lumenal segment spans residues 1-8 (MAQLDTLD). The helical transmembrane segment at 9–31 (IVVLVVLLVGSVAYFTKGSYWAV) threads the bilayer. Residues 32–695 (PKDPYAAANS…SGSYQEDVWS (664 aa)) lie on the Cytoplasmic side of the membrane. One can recognise a Flavodoxin-like domain in the interval 66–221 (CVIFYGSQTG…DFLAWKEPMW (156 aa)). Residues 72 to 77 (SQTGTA), 123 to 126 (ATYG), 169 to 178 (LGNNTYEHYN), and Asp-204 contribute to the FMN site. Residues 277-538 (HNPYIAPIVE…HVRHSNFKLP (262 aa)) enclose the FAD-binding FR-type domain. Arg-296 serves as a coordination point for NADP(+). FAD contacts are provided by residues 451–454 (RYYS), 469–471 (TAV), and 486–489 (GVTT). Residues Thr-552, 614–615 (SR), 620–624 (KVYVQ), and Glu-656 contribute to the NADP(+) site. Position 694 (Trp-694) interacts with FAD.

It belongs to the NADPH--cytochrome P450 reductase family. In the N-terminal section; belongs to the flavodoxin family. This sequence in the C-terminal section; belongs to the flavoprotein pyridine nucleotide cytochrome reductase family. FAD serves as cofactor. FMN is required as a cofactor.

Its subcellular location is the endoplasmic reticulum membrane. It is found in the mitochondrion outer membrane. It localises to the cell membrane. It carries out the reaction 2 oxidized [cytochrome P450] + NADPH = 2 reduced [cytochrome P450] + NADP(+) + H(+). This enzyme is required for electron transfer from NADP to cytochrome P450 in microsomes. It can also provide electron transfer to heme oxygenase and cytochrome B5. Involved in ergosterol biosynthesis. The chain is NADPH--cytochrome P450 reductase from Aspergillus fumigatus (strain ATCC MYA-4609 / CBS 101355 / FGSC A1100 / Af293) (Neosartorya fumigata).